We begin with the raw amino-acid sequence, 1620 residues long: ALK tyrosine kinase receptor (1620 aa).

Positions 1–18 (MGAIGLLWLLPLLLSTAA) are cleaved as a signal peptide. Residues 19-1038 (VGSGMGTGQR…PHLPLSLILS (1020 aa)) lie on the Extracellular side of the membrane. A heparin-binding region region spans residues 48–70 (RLQRKSLAVDFVVPSLFRVYARD). N-linked (GlcNAc...) asparagine glycosylation is found at Asn169, Asn244, Asn285, Asn324, Asn411, Asn424, Asn445, Asn563, Asn571, and Asn627. An MAM 1 domain is found at 264–427 (LECSFDFPCE…DFFALKNCSE (164 aa)). The 37-residue stretch at 437–473 (LQSSFTCWNGTVLQLGQACDFHQDCAQGEDESQMCRK) folds into the LDL-receptor class A domain. Positions 478-636 (FYCNFEDGFC…NISISLDCYL (159 aa)) constitute an MAM 2 domain. A disordered region spans residues 650–674 (PKSRNLFERNPNKELKPGENSPRQT). A compositionally biased stretch (basic and acidic residues) spans 654-666 (NLFERNPNKELKP). Cysteines 688 and 701 form a disulfide. N-linked (GlcNAc...) asparagine glycosylation is present at Asn709. A disulfide bridge links Cys783 with Cys794. N-linked (GlcNAc...) asparagine glycosylation is found at Asn808, Asn863, Asn864, and Asn886. An intrachain disulfide couples Cys906 to Cys928. An N-linked (GlcNAc...) asparagine glycan is attached at Asn986. 3 disulfides stabilise this stretch: Cys987–Cys995, Cys990–Cys1006, and Cys1008–Cys1021. The tract at residues 987–1025 (CSHCEVDECHMDPESHKVICFCDHGTVLAEDGVSCIVSP) is EGF-like. Residues 1039–1059 (VVTSALVAALVLAFSGIMIVY) form a helical membrane-spanning segment. Residues 1060 to 1620 (RRKHQELQAM…SKNSMNQPGP (561 aa)) are Cytoplasmic-facing. A phosphotyrosine mark is found at Tyr1078, Tyr1092, and Tyr1096. The region spanning 1116 to 1392 (ITLIRGLGHG…IEYCTQDPDV (277 aa)) is the Protein kinase domain. His1124 is a binding site for ATP. Tyr1131 is subject to Phosphotyrosine. ATP is bound by residues Lys1150 and 1197-1199 (ELM). The active-site Proton acceptor is the Asp1249. An ATP-binding site is contributed by Asp1270. Tyr1278 is subject to Phosphotyrosine. Residues 1408–1463 (EEKVPVRPKDPEGVPPLLVSQQAKREEERSPAAPPPLPTTSSGKAAKKPTAAEISV) are disordered. The segment covering 1410–1419 (KVPVRPKDPE) has biased composition (basic and acidic residues). Phosphotyrosine is present on Tyr1507. The tract at residues 1514 to 1540 (KPTKKNNPIAKKEPHDRGNLGLEGSCT) is disordered. Position 1604 is a phosphotyrosine (Tyr1604).

It belongs to the protein kinase superfamily. Tyr protein kinase family. Insulin receptor subfamily. As to quaternary structure, homodimer; homodimerizes following heparin- and ligand-binding. Interacts with CBL, IRS1, PIK3R1 and PLCG1. Interacts with FRS2 and SHC1. Interacts with PTN and MDK. Phosphorylated at tyrosine residues by autocatalysis, which activates kinase activity. In cells not stimulated by a ligand, receptor protein tyrosine phosphatase beta and zeta complex (PTPRB/PTPRZ1) dephosphorylates ALK at the sites in ALK that are undergoing autophosphorylation through autoactivation. Phosphorylation at Tyr-1507 is critical for SHC1 association. Post-translationally, N-glycosylated. In terms of tissue distribution, expressed in brain and CNS. Also expressed in the small intestine and testis, but not in normal lymphoid cells.

Its subcellular location is the cell membrane. The enzyme catalyses L-tyrosyl-[protein] + ATP = O-phospho-L-tyrosyl-[protein] + ADP + H(+). With respect to regulation, activated upon ALKAL2 ligand-binding. ALKAL2-driven activation is coupled with heparin-binding. Following ligand-binding, homodimerizes and autophosphorylates, activating its kinase activity. Inactivated through dephosphorylation by receptor protein tyrosine phosphatase beta and zeta complex (PTPRB/PTPRZ1) when there is no stimulation by a ligand. Staurosporine, crizotinib and CH5424802 act as inhibitors of ALK kinase activity. Functionally, neuronal receptor tyrosine kinase that is essentially and transiently expressed in specific regions of the central and peripheral nervous systems and plays an important role in the genesis and differentiation of the nervous system. Also acts as a key thinness protein involved in the resistance to weight gain: in hypothalamic neurons, controls energy expenditure acting as a negative regulator of white adipose tissue lipolysis and sympathetic tone to fine-tune energy homeostasis. Following activation by ALKAL2 ligand at the cell surface, transduces an extracellular signal into an intracellular response. In contrast, ALKAL1 is not a potent physiological ligand for ALK. Ligand-binding to the extracellular domain induces tyrosine kinase activation, leading to activation of the mitogen-activated protein kinase (MAPK) pathway. Phosphorylates almost exclusively at the first tyrosine of the Y-x-x-x-Y-Y motif. Induces tyrosine phosphorylation of CBL, FRS2, IRS1 and SHC1, as well as of the MAP kinases MAPK1/ERK2 and MAPK3/ERK1. ALK activation may also be regulated by pleiotrophin (PTN) and midkine (MDK). PTN-binding induces MAPK pathway activation, which is important for the anti-apoptotic signaling of PTN and regulation of cell proliferation. MDK-binding induces phosphorylation of the ALK target insulin receptor substrate (IRS1), activates mitogen-activated protein kinases (MAPKs) and PI3-kinase, resulting also in cell proliferation induction. Drives NF-kappa-B activation, probably through IRS1 and the activation of the AKT serine/threonine kinase. Recruitment of IRS1 to activated ALK and the activation of NF-kappa-B are essential for the autocrine growth and survival signaling of MDK. The protein is ALK tyrosine kinase receptor of Homo sapiens (Human).